We begin with the raw amino-acid sequence, 274 residues long: Thiamine kinase (274 aa).

It belongs to the thiamine kinase family.

The catalysed reaction is thiamine + ATP = thiamine phosphate + ADP + H(+). It participates in cofactor biosynthesis; thiamine diphosphate biosynthesis; thiamine phosphate from thiamine: step 1/1. Its function is as follows. Catalyzes the ATP-dependent phosphorylation of thiamine to thiamine phosphate. Is involved in thiamine salvage. The sequence is that of Thiamine kinase from Salmonella gallinarum (strain 287/91 / NCTC 13346).